Reading from the N-terminus, the 398-residue chain is Lysophospholipid transporter LplT (398 aa).

11 consecutive transmembrane segments (helical) span residues 19 to 39 (VIAAQFLSAFGDNALLFATLA), 53 to 73 (ILQMVFVGAYILFAPFVGQVA), 91 to 111 (LGAASICFGFNPFVGYTLVGI), 139 to 159 (LMEASTIAAILLGSVAGGVLA), 164 to 184 (IAALVACALAYAGAVVANLFI), 227 to 247 (LFWGAGVTLRFLLVLWVPVAL), 257 to 277 (YLNAMVAIGIVVGAGAAAKLV), 281 to 301 (TVARCMPAGILIGVVVLIFSL), 304 to 324 (ALLPAYALLTLIGVLGGFFVV), 350 to 370 (GENSAMLLMLGLYSLAVLVGI), and 372 to 392 (VVAIGIGFGGLFALAIAALWI).

It belongs to the major facilitator superfamily. LplT (TC 2.A.1.42) family.

It localises to the cell inner membrane. Its function is as follows. Catalyzes the facilitated diffusion of 2-acyl-glycero-3-phosphoethanolamine (2-acyl-GPE) into the cell. This chain is Lysophospholipid transporter LplT, found in Citrobacter koseri (strain ATCC BAA-895 / CDC 4225-83 / SGSC4696).